Consider the following 312-residue polypeptide: tRNA-dihydrouridine(16) synthase (312 aa).

FMN contacts are provided by residues 7–9 (PME) and glutamine 68. The Proton donor role is filled by cysteine 98. FMN-binding positions include lysine 139, 200 to 202 (NGE), and 224 to 225 (GR).

Belongs to the Dus family. DusC subfamily. It depends on FMN as a cofactor.

The catalysed reaction is 5,6-dihydrouridine(16) in tRNA + NADP(+) = uridine(16) in tRNA + NADPH + H(+). It catalyses the reaction 5,6-dihydrouridine(16) in tRNA + NAD(+) = uridine(16) in tRNA + NADH + H(+). Functionally, catalyzes the synthesis of 5,6-dihydrouridine (D), a modified base found in the D-loop of most tRNAs, via the reduction of the C5-C6 double bond in target uridines. Specifically modifies U16 in tRNAs. The sequence is that of tRNA-dihydrouridine(16) synthase from Yersinia pestis.